The primary structure comprises 63 residues: MAGGRVAHATLKGPSVVKEIFIGLTLGLVAGGMWKMHHWNEQRKTRSFYDMLEKGQISVVVEE.

A helical transmembrane segment spans residues 16–34 (VVKEIFIGLTLGLVAGGMW).

It belongs to the cytochrome c oxidase subunit 5C family.

It is found in the mitochondrion inner membrane. In terms of biological role, this protein is one of the nuclear-coded polypeptide chains of cytochrome c oxidase, the terminal oxidase in mitochondrial electron transport. In Hordeum vulgare (Barley), this protein is Cytochrome c oxidase subunit 5C (COX5C).